We begin with the raw amino-acid sequence, 89 residues long: Small ribosomal subunit protein bS20 (89 aa).

Residues 1–12 show a composition bias toward basic residues; the sequence is MANIKSAKKRAK. The segment at 1 to 22 is disordered; sequence MANIKSAKKRAKQTIVRNERNT.

Belongs to the bacterial ribosomal protein bS20 family.

Its function is as follows. Binds directly to 16S ribosomal RNA. The chain is Small ribosomal subunit protein bS20 from Xanthomonas oryzae pv. oryzae (strain KACC10331 / KXO85).